Here is a 114-residue protein sequence, read N- to C-terminus: Seed trypsin/chymotrypsin inhibitor TI5-72 (114 aa).

The signal sequence occupies residues methionine 1 to alanine 28. Positions arginine 29–asparagine 42 are excised as a propeptide. 7 disulfide bridges follow: cysteine 50–cysteine 103, cysteine 51–cysteine 66, cysteine 54–cysteine 99, cysteine 56–cysteine 64, cysteine 73–cysteine 80, cysteine 77–cysteine 92, and cysteine 82–cysteine 90.

Belongs to the Bowman-Birk serine protease inhibitor family. As to expression, seed.

Functionally, inhibitor of trypsin and of chymotrypsin. May function as a natural phytochemical defense against predators. The protein is Seed trypsin/chymotrypsin inhibitor TI5-72 (TI572) of Pisum sativum (Garden pea).